The sequence spans 815 residues: Leucine--tRNA ligase (815 aa).

The short motif at 42–52 (PYPSGRLHMGH) is the 'HIGH' region element. A 'KMSKS' region motif is present at residues 574–578 (KMSKS). K577 is an ATP binding site.

Belongs to the class-I aminoacyl-tRNA synthetase family.

The protein localises to the cytoplasm. The enzyme catalyses tRNA(Leu) + L-leucine + ATP = L-leucyl-tRNA(Leu) + AMP + diphosphate. The polypeptide is Leucine--tRNA ligase (Alcanivorax borkumensis (strain ATCC 700651 / DSM 11573 / NCIMB 13689 / SK2)).